A 223-amino-acid polypeptide reads, in one-letter code: Small ribosomal subunit protein uS3 (223 aa).

The 69-residue stretch at 38-106 (IREFIAKQLT…RVHINIVEIK (69 aa)) folds into the KH type-2 domain.

It belongs to the universal ribosomal protein uS3 family. As to quaternary structure, part of the 30S ribosomal subunit. Forms a tight complex with proteins S10 and S14.

Binds the lower part of the 30S subunit head. Binds mRNA in the 70S ribosome, positioning it for translation. In Pediococcus pentosaceus (strain ATCC 25745 / CCUG 21536 / LMG 10740 / 183-1w), this protein is Small ribosomal subunit protein uS3.